Here is a 219-residue protein sequence, read N- to C-terminus: Regulatory protein YeiL (219 aa).

A sensory domain region spans residues 19–97 (RLFHFLARDY…IEECWCLALP (79 aa)). Positions 68, 91, 93, and 116 each coordinate [4Fe-4S] cluster. The interval 111-131 (FLRKLCVTLSHKNYRNIVSLT) is dimer interface. The region spanning 136–199 (FPLVNRLAAF…KKGYLIKNRK (64 aa)) is the HTH crp-type domain. The segment at residues 158–181 (KHTQAAEYLGVSYRHLLYVLAQFI) is a DNA-binding region (H-T-H motif).

As to quaternary structure, homodimer. The cofactor is [4Fe-4S] cluster.

The protein localises to the cytoplasm. Functionally, transcription regulator involved in mid-term, stationary-phase viability under nitrogen starvation. Might control expression of the salvage pathways or in some other way repress the recycling of nucleobases to nucleic acids and enhance their use as general nitrogen sources during nitrogen-limited growth. The polypeptide is Regulatory protein YeiL (yeiL) (Escherichia coli O157:H7).